Consider the following 209-residue polypeptide: Uracil phosphoribosyltransferase (209 aa).

5-phospho-alpha-D-ribose 1-diphosphate is bound by residues R79, R104, and 131–139 (DPMLATGNS). Uracil-binding positions include I194 and 199-201 (GDA). Residue D200 participates in 5-phospho-alpha-D-ribose 1-diphosphate binding.

It belongs to the UPRTase family. The cofactor is Mg(2+).

It catalyses the reaction UMP + diphosphate = 5-phospho-alpha-D-ribose 1-diphosphate + uracil. It functions in the pathway pyrimidine metabolism; UMP biosynthesis via salvage pathway; UMP from uracil: step 1/1. With respect to regulation, allosterically activated by GTP. Functionally, catalyzes the conversion of uracil and 5-phospho-alpha-D-ribose 1-diphosphate (PRPP) to UMP and diphosphate. The protein is Uracil phosphoribosyltransferase of Acidovorax sp. (strain JS42).